The following is a 204-amino-acid chain: Imidazoleglycerol-phosphate dehydratase (204 aa).

This sequence belongs to the imidazoleglycerol-phosphate dehydratase family.

Its subcellular location is the cytoplasm. It carries out the reaction D-erythro-1-(imidazol-4-yl)glycerol 3-phosphate = 3-(imidazol-4-yl)-2-oxopropyl phosphate + H2O. It participates in amino-acid biosynthesis; L-histidine biosynthesis; L-histidine from 5-phospho-alpha-D-ribose 1-diphosphate: step 6/9. The sequence is that of Imidazoleglycerol-phosphate dehydratase from Corynebacterium urealyticum (strain ATCC 43042 / DSM 7109).